The chain runs to 129 residues: Large ribosomal subunit protein bL12 (129 aa).

The segment covering Met95 to Gly123 has biased composition (basic and acidic residues). Positions Met95 to Lys129 are disordered.

This sequence belongs to the bacterial ribosomal protein bL12 family. As to quaternary structure, homodimer. Part of the ribosomal stalk of the 50S ribosomal subunit. Forms a multimeric L10(L12)X complex, where L10 forms an elongated spine to which 2 to 4 L12 dimers bind in a sequential fashion. Binds GTP-bound translation factors.

Forms part of the ribosomal stalk which helps the ribosome interact with GTP-bound translation factors. Is thus essential for accurate translation. The polypeptide is Large ribosomal subunit protein bL12 (Acaryochloris marina (strain MBIC 11017)).